The following is a 430-amino-acid chain: 3-phosphoshikimate 1-carboxyvinyltransferase (430 aa).

Positions 25, 26, and 30 each coordinate 3-phosphoshikimate. Phosphoenolpyruvate is bound at residue Lys25. Residues Gly97 and Arg125 each coordinate phosphoenolpyruvate. 3-phosphoshikimate-binding residues include Ser170, Gln172, Asp318, and Lys345. Gln172 lines the phosphoenolpyruvate pocket. The Proton acceptor role is filled by Asp318. 2 residues coordinate phosphoenolpyruvate: Arg349 and Arg391.

The protein belongs to the EPSP synthase family. In terms of assembly, monomer.

Its subcellular location is the cytoplasm. It carries out the reaction 3-phosphoshikimate + phosphoenolpyruvate = 5-O-(1-carboxyvinyl)-3-phosphoshikimate + phosphate. Its pathway is metabolic intermediate biosynthesis; chorismate biosynthesis; chorismate from D-erythrose 4-phosphate and phosphoenolpyruvate: step 6/7. In terms of biological role, catalyzes the transfer of the enolpyruvyl moiety of phosphoenolpyruvate (PEP) to the 5-hydroxyl of shikimate-3-phosphate (S3P) to produce enolpyruvyl shikimate-3-phosphate and inorganic phosphate. This chain is 3-phosphoshikimate 1-carboxyvinyltransferase, found in Shouchella clausii (strain KSM-K16) (Alkalihalobacillus clausii).